Consider the following 83-residue polypeptide: Exodeoxyribonuclease 7 small subunit (83 aa).

Belongs to the XseB family. In terms of assembly, heterooligomer composed of large and small subunits.

The protein localises to the cytoplasm. It carries out the reaction Exonucleolytic cleavage in either 5'- to 3'- or 3'- to 5'-direction to yield nucleoside 5'-phosphates.. In terms of biological role, bidirectionally degrades single-stranded DNA into large acid-insoluble oligonucleotides, which are then degraded further into small acid-soluble oligonucleotides. This is Exodeoxyribonuclease 7 small subunit from Moorella thermoacetica (strain ATCC 39073 / JCM 9320).